A 159-amino-acid polypeptide reads, in one-letter code: SsrA-binding protein (159 aa).

It belongs to the SmpB family.

The protein localises to the cytoplasm. Its function is as follows. Required for rescue of stalled ribosomes mediated by trans-translation. Binds to transfer-messenger RNA (tmRNA), required for stable association of tmRNA with ribosomes. tmRNA and SmpB together mimic tRNA shape, replacing the anticodon stem-loop with SmpB. tmRNA is encoded by the ssrA gene; the 2 termini fold to resemble tRNA(Ala) and it encodes a 'tag peptide', a short internal open reading frame. During trans-translation Ala-aminoacylated tmRNA acts like a tRNA, entering the A-site of stalled ribosomes, displacing the stalled mRNA. The ribosome then switches to translate the ORF on the tmRNA; the nascent peptide is terminated with the 'tag peptide' encoded by the tmRNA and targeted for degradation. The ribosome is freed to recommence translation, which seems to be the essential function of trans-translation. This is SsrA-binding protein from Bifidobacterium adolescentis (strain ATCC 15703 / DSM 20083 / NCTC 11814 / E194a).